The following is a 458-amino-acid chain: GTPase Der (458 aa).

EngA-type G domains are found at residues 4-169 (PSIA…PKDF) and 178-353 (VMMS…TQHR). Residues 10-17 (GRPNVGKS), 57-61 (DTGGL), 120-123 (NKCE), 184-191 (GRPNVGKS), 231-235 (DTAGI), and 296-299 (NKWD) contribute to the GTP site. One can recognise a KH-like domain in the interval 354 to 439 (MRVTTSVVNE…PIILLWRGKQ (86 aa)).

This sequence belongs to the TRAFAC class TrmE-Era-EngA-EngB-Septin-like GTPase superfamily. EngA (Der) GTPase family. As to quaternary structure, associates with the 50S ribosomal subunit.

Its function is as follows. GTPase that plays an essential role in the late steps of ribosome biogenesis. The sequence is that of GTPase Der from Prochlorococcus marinus (strain MIT 9515).